We begin with the raw amino-acid sequence, 89 residues long: UPF0223 protein BCG9842_B1176 (89 aa).

Belongs to the UPF0223 family.

The polypeptide is UPF0223 protein BCG9842_B1176 (Bacillus cereus (strain G9842)).